A 278-amino-acid chain; its full sequence is Pantothenate synthetase (278 aa).

Residue 27 to 34 participates in ATP binding; the sequence is MGNLHEGH. H34 serves as the catalytic Proton donor. Q58 is a binding site for (R)-pantoate. Beta-alanine is bound at residue Q58. 147–150 contacts ATP; that stretch reads GEKD. (R)-pantoate is bound at residue Q153. Residue 184-187 participates in ATP binding; sequence YSSR.

It belongs to the pantothenate synthetase family. Homodimer.

The protein localises to the cytoplasm. It catalyses the reaction (R)-pantoate + beta-alanine + ATP = (R)-pantothenate + AMP + diphosphate + H(+). It participates in cofactor biosynthesis; (R)-pantothenate biosynthesis; (R)-pantothenate from (R)-pantoate and beta-alanine: step 1/1. Catalyzes the condensation of pantoate with beta-alanine in an ATP-dependent reaction via a pantoyl-adenylate intermediate. The polypeptide is Pantothenate synthetase (Acidithiobacillus ferrooxidans (strain ATCC 23270 / DSM 14882 / CIP 104768 / NCIMB 8455) (Ferrobacillus ferrooxidans (strain ATCC 23270))).